Reading from the N-terminus, the 181-residue chain is Peptidyl-tRNA hydrolase (181 aa).

Position 14 (Tyr14) interacts with tRNA. His19 serves as the catalytic Proton acceptor. TRNA is bound by residues Tyr62, Asn64, and Asn108.

This sequence belongs to the PTH family. Monomer.

Its subcellular location is the cytoplasm. The catalysed reaction is an N-acyl-L-alpha-aminoacyl-tRNA + H2O = an N-acyl-L-amino acid + a tRNA + H(+). Hydrolyzes ribosome-free peptidyl-tRNAs (with 1 or more amino acids incorporated), which drop off the ribosome during protein synthesis, or as a result of ribosome stalling. Functionally, catalyzes the release of premature peptidyl moieties from peptidyl-tRNA molecules trapped in stalled 50S ribosomal subunits, and thus maintains levels of free tRNAs and 50S ribosomes. This chain is Peptidyl-tRNA hydrolase, found in Campylobacter jejuni subsp. jejuni serotype O:2 (strain ATCC 700819 / NCTC 11168).